The sequence spans 825 residues: NT-3 growth factor receptor (825 aa).

Positions 1 to 31 (MDVSLCPAKCSFWRIFLLGSVWLDYVGSVLA) are cleaved as a signal peptide. Disulfide bonds link Cys-32–Cys-38 and Cys-36–Cys-45. The Extracellular portion of the chain corresponds to 32–429 (CPANCVCSKT…TVTHKPEEDT (398 aa)). N-linked (GlcNAc...) asparagine glycosylation is found at Asn-68, Asn-72, and Asn-79. 2 LRR repeats span residues 104-125 (GLQK…AFAK) and 128-149 (HLRY…LFQT). N-linked (GlcNAc...) asparagine glycosylation is found at Asn-133 and Asn-163. The region spanning 160-209 (NFFNCSCDIRWMQLWQEQGEAKLNNQNLYCINADGSQLPLFRMNISQCDL) is the LRRCT domain. Disulfide bonds link Cys-164–Cys-189 and Cys-166–Cys-207. Asn-203, Asn-218, Asn-232, Asn-259, Asn-267, Asn-272, and Asn-294 each carry an N-linked (GlcNAc...) asparagine glycan. Ig-like C2-type domains are found at residues 210 to 300 (PEIS…VALT) and 309 to 382 (SLEE…IAKN). A disulfide bond links Cys-231 and Cys-284. Cysteines 320 and 362 form a disulfide. Residues Asn-375 and Asn-388 are each glycosylated (N-linked (GlcNAc...) asparagine). Residues 430 to 453 (FGVSIAVGLAAFACVLLVVLFIMI) form a helical membrane-spanning segment. The Cytoplasmic segment spans residues 454–825 (NKYGRRSKFG…ATPIYLDILG (372 aa)). Ser-493 carries the post-translational modification Phosphoserine. The residue at position 516 (Tyr-516) is a Phosphotyrosine; by autocatalysis. The 288-residue stretch at 538-825 (IVLKRELGEG…ATPIYLDILG (288 aa)) folds into the Protein kinase domain. ATP contacts are provided by residues 544-552 (LGEGAFGKV) and Lys-572. Asp-679 acts as the Proton acceptor in catalysis. Phosphotyrosine; by autocatalysis occurs at positions 705, 709, and 710.

Belongs to the protein kinase superfamily. Tyr protein kinase family. Insulin receptor subfamily. As to quaternary structure, exists in a dynamic equilibrium between monomeric (low affinity) and dimeric (high affinity) structures. Binds SH2B2. Interacts with SQSTM1 and KIDINS220. Interacts with PTPRS. Interacts with MAPK8IP3/JIP3. Ligand-mediated auto-phosphorylation.

The protein localises to the membrane. The enzyme catalyses L-tyrosyl-[protein] + ATP = O-phospho-L-tyrosyl-[protein] + ADP + H(+). Its function is as follows. Receptor tyrosine kinase involved in nervous system and probably heart development. Upon binding of its ligand NTF3/neurotrophin-3, NTRK3 autophosphorylates and activates different signaling pathways, including the phosphatidylinositol 3-kinase/AKT and the MAPK pathways, that control cell survival and differentiation. In Macaca fascicularis (Crab-eating macaque), this protein is NT-3 growth factor receptor (NTRK3).